A 254-amino-acid polypeptide reads, in one-letter code: MVTGIKKTVKVVVVGDGAVGKTSLLILYTTKAFPKDYVPTVFDNFNCLEMYDNKPVNLVLWDTAGQEDYDNLRPLSYPQTDVFIICYSVVKRDSLDNIKYKWLPEINQTNQGTPIILVGTKTDLREDKKTLSQLQESKQEPVSRDEGVALAKEIGAVQFFECSALTGNGVNDIFAAAIKAAFNKPAVTSPTSKSSGKSSPSSTSSKPSKTTTTTTTSSSSSSPPAASTAKPAGEKKLSWGLFRKKDKDEKKPAK.

Glycine 15 to threonine 22 serves as a coordination point for GTP. Residues tyrosine 37 to phenylalanine 45 carry the Effector region motif. Residues aspartate 62–glutamine 66 and threonine 120–aspartate 123 contribute to the GTP site. Positions alanine 186 to proline 231 are enriched in low complexity. Residues alanine 186–lysine 254 are disordered. The span at alanine 232 to lysine 254 shows a compositional bias: basic and acidic residues.

The protein belongs to the small GTPase superfamily. Rho family.

The polypeptide is Rho-related protein racD (racD) (Dictyostelium discoideum (Social amoeba)).